The following is a 222-amino-acid chain: Peptide methionine sulfoxide reductase MsrA (222 aa).

The active site involves Cys60.

It belongs to the MsrA Met sulfoxide reductase family.

The enzyme catalyses L-methionyl-[protein] + [thioredoxin]-disulfide + H2O = L-methionyl-(S)-S-oxide-[protein] + [thioredoxin]-dithiol. It catalyses the reaction [thioredoxin]-disulfide + L-methionine + H2O = L-methionine (S)-S-oxide + [thioredoxin]-dithiol. Functionally, has an important function as a repair enzyme for proteins that have been inactivated by oxidation. Catalyzes the reversible oxidation-reduction of methionine sulfoxide in proteins to methionine. The polypeptide is Peptide methionine sulfoxide reductase MsrA (Pseudomonas entomophila (strain L48)).